Here is a 283-residue protein sequence, read N- to C-terminus: Thymidylate synthase (283 aa).

R22 contributes to the dUMP binding site. C160 acts as the Nucleophile in catalysis. DUMP contacts are provided by residues 180–183 (RSCD), N191, and 221–223 (HIY). D183 serves as a coordination point for (6R)-5,10-methylene-5,6,7,8-tetrahydrofolate. Position 282 (S282) interacts with (6R)-5,10-methylene-5,6,7,8-tetrahydrofolate.

The protein belongs to the thymidylate synthase family. Bacterial-type ThyA subfamily. Homodimer.

The protein localises to the cytoplasm. The catalysed reaction is dUMP + (6R)-5,10-methylene-5,6,7,8-tetrahydrofolate = 7,8-dihydrofolate + dTMP. Its pathway is pyrimidine metabolism; dTTP biosynthesis. Catalyzes the reductive methylation of 2'-deoxyuridine-5'-monophosphate (dUMP) to 2'-deoxythymidine-5'-monophosphate (dTMP) while utilizing 5,10-methylenetetrahydrofolate (mTHF) as the methyl donor and reductant in the reaction, yielding dihydrofolate (DHF) as a by-product. This enzymatic reaction provides an intracellular de novo source of dTMP, an essential precursor for DNA biosynthesis. The sequence is that of Thymidylate synthase from Photobacterium profundum (strain SS9).